The primary structure comprises 255 residues: ATP synthase subunit b 1 (255 aa).

The chain crosses the membrane as a helical span at residues 5-22 (WITVAAQIVNFLLLIWLL).

This sequence belongs to the ATPase B chain family. As to quaternary structure, F-type ATPases have 2 components, F(1) - the catalytic core - and F(0) - the membrane proton channel. F(1) has five subunits: alpha(3), beta(3), gamma(1), delta(1), epsilon(1). F(0) has three main subunits: a(1), b(2) and c(10-14). The alpha and beta chains form an alternating ring which encloses part of the gamma chain. F(1) is attached to F(0) by a central stalk formed by the gamma and epsilon chains, while a peripheral stalk is formed by the delta and b chains.

Its subcellular location is the cell inner membrane. Its function is as follows. F(1)F(0) ATP synthase produces ATP from ADP in the presence of a proton or sodium gradient. F-type ATPases consist of two structural domains, F(1) containing the extramembraneous catalytic core and F(0) containing the membrane proton channel, linked together by a central stalk and a peripheral stalk. During catalysis, ATP synthesis in the catalytic domain of F(1) is coupled via a rotary mechanism of the central stalk subunits to proton translocation. Functionally, component of the F(0) channel, it forms part of the peripheral stalk, linking F(1) to F(0). The chain is ATP synthase subunit b 1 from Dinoroseobacter shibae (strain DSM 16493 / NCIMB 14021 / DFL 12).